Reading from the N-terminus, the 55-residue chain is Sec-independent protein translocase protein TatA (55 aa).

A helical membrane pass occupies residues 1–21 (MSLGPWQLFLVLIIILVLFGA).

This sequence belongs to the TatA/E family. As to quaternary structure, the Tat system comprises two distinct complexes: a TatABC complex, containing multiple copies of TatA, TatB and TatC subunits, and a separate TatA complex, containing only TatA subunits. Substrates initially bind to the TatABC complex, which probably triggers association of the separate TatA complex to form the active translocon.

It localises to the cell membrane. Its function is as follows. Part of the twin-arginine translocation (Tat) system that transports large folded proteins containing a characteristic twin-arginine motif in their signal peptide across membranes. TatA could form the protein-conducting channel of the Tat system. This chain is Sec-independent protein translocase protein TatA, found in Wolbachia pipientis wMel.